The following is a 139-amino-acid chain: I-Kappa-B like protein N1 (139 aa).

ANK repeat units lie at residues 16-48 (NGEN…QYLL), 54-87 (EGRK…DVNG), and 92-122 (TGDT…NINA).

It belongs to the polydnaviridae I-Kappa-B-like protein family.

Its function is as follows. Suppresses the host immune response through NF-kappa-B inactivation. Possesses ankyrin repeat domain required for NF-kappa-B binding but lack the regulatory regions required for dissociation from NF-kappa-B and degradation. Therefore, prevents host NF-kappa-B release and subsequent activation. The chain is I-Kappa-B like protein N1 (N2) from Microplitis demolitor bracovirus (isolate Webb) (MdBV).